A 352-amino-acid polypeptide reads, in one-letter code: MSSSKKGSDRNQIRKSLRKLKKQIGELEKLESPDRLNNVKPIFIKRNIYLKKKLKKKVKDHGIFCSCSLDPGSSTLCGSDCNCGILLSSCSSSCKCSSECTNKPFQQRHIKKMKLVQTEKCGYGIVADEDINSGEFIIEYVGEVIDDKICEERLWKLNHKVETNFYLCQINWNMVIDATHKGNKSRYINHSCSPNTEMQKWIIDGETRIGIFATRFINKGEQLTYDYQFVQFGADQDCYCGAVCCRKKLGAKPCKTKNTTLEEAVKPVACKVTWKTPKLLNSEVRETNLDASGQAWNNHSQRKICCRDCIGAYYTAQMKVLTLVVDIFQVMYEDGVTEIIDMCREVWKVVTA.

The 50-residue stretch at 60–109 (DHGIFCSCSLDPGSSTLCGSDCNCGILLSSCSSSCKCSSECTNKPFQQRH) folds into the AWS domain. Residues 111 to 228 (KKMKLVQTEK…KGEQLTYDYQ (118 aa)) form the SET domain. The Post-SET domain occupies 234-250 (ADQDCYCGAVCCRKKLG).

This sequence belongs to the class V-like SAM-binding methyltransferase superfamily. Histone-lysine methyltransferase family. SET2 subfamily.

The protein resides in the nucleus. It is found in the chromosome. It localises to the centromere. It catalyses the reaction L-lysyl-[histone] + S-adenosyl-L-methionine = N(6)-methyl-L-lysyl-[histone] + S-adenosyl-L-homocysteine + H(+). Its function is as follows. Histone methyltransferase. This chain is Putative histone-lysine N-methyltransferase ASHH4 (ASHH4), found in Arabidopsis thaliana (Mouse-ear cress).